The sequence spans 314 residues: Acetaldehyde dehydrogenase 2 (314 aa).

Residue 15-18 coordinates NAD(+); the sequence is SGNI. The active-site Acyl-thioester intermediate is the cysteine 133. Residues 164-172 and asparagine 289 each bind NAD(+); that span reads SAGPGTRQN.

The protein belongs to the acetaldehyde dehydrogenase family.

It catalyses the reaction acetaldehyde + NAD(+) + CoA = acetyl-CoA + NADH + H(+). This Nocardioides sp. (strain ATCC BAA-499 / JS614) protein is Acetaldehyde dehydrogenase 2.